The chain runs to 396 residues: uncharacterized protein (396 aa).

K219 carries the N6-(pyridoxal phosphate)lysine modification.

Belongs to the class-V pyridoxal-phosphate-dependent aminotransferase family. Pyridoxal 5'-phosphate is required as a cofactor.

The protein resides in the cytoplasm. The protein localises to the nucleus. This is an uncharacterized protein from Schizosaccharomyces pombe (strain 972 / ATCC 24843) (Fission yeast).